An 821-amino-acid polypeptide reads, in one-letter code: Leucine--tRNA ligase (821 aa).

The 'HIGH' region signature appears at Pro40–His50. The 'KMSKS' region signature appears at Lys586–Ser590. Lys589 provides a ligand contact to ATP.

Belongs to the class-I aminoacyl-tRNA synthetase family.

The protein localises to the cytoplasm. It carries out the reaction tRNA(Leu) + L-leucine + ATP = L-leucyl-tRNA(Leu) + AMP + diphosphate. The chain is Leucine--tRNA ligase from Aliarcobacter butzleri (strain RM4018) (Arcobacter butzleri).